A 394-amino-acid polypeptide reads, in one-letter code: DNA primase large subunit PriL (394 aa).

Positions 231, 340, 351, and 357 each coordinate [4Fe-4S] cluster.

This sequence belongs to the eukaryotic-type primase large subunit family. As to quaternary structure, heterodimer of a small subunit (PriS) and a large subunit (PriL). The cofactor is [4Fe-4S] cluster.

Regulatory subunit of DNA primase, an RNA polymerase that catalyzes the synthesis of short RNA molecules used as primers for DNA polymerase during DNA replication. Stabilizes and modulates the activity of the small subunit, increasing the rate of DNA synthesis, and conferring RNA synthesis capability. The DNA polymerase activity may enable DNA primase to also catalyze primer extension after primer synthesis. May also play a role in DNA repair. The polypeptide is DNA primase large subunit PriL (Pyrococcus horikoshii (strain ATCC 700860 / DSM 12428 / JCM 9974 / NBRC 100139 / OT-3)).